The sequence spans 361 residues: Phosphoserine aminotransferase (361 aa).

Position 42 (Arg-42) interacts with L-glutamate. Pyridoxal 5'-phosphate is bound by residues 76–77 (AR), Trp-102, Thr-153, Asp-173, and Gln-196. Lys-197 is modified (N6-(pyridoxal phosphate)lysine). 238–239 (NT) lines the pyridoxal 5'-phosphate pocket.

It belongs to the class-V pyridoxal-phosphate-dependent aminotransferase family. SerC subfamily. Homodimer. It depends on pyridoxal 5'-phosphate as a cofactor.

The protein localises to the cytoplasm. It catalyses the reaction O-phospho-L-serine + 2-oxoglutarate = 3-phosphooxypyruvate + L-glutamate. The enzyme catalyses 4-(phosphooxy)-L-threonine + 2-oxoglutarate = (R)-3-hydroxy-2-oxo-4-phosphooxybutanoate + L-glutamate. It participates in amino-acid biosynthesis; L-serine biosynthesis; L-serine from 3-phospho-D-glycerate: step 2/3. The protein operates within cofactor biosynthesis; pyridoxine 5'-phosphate biosynthesis; pyridoxine 5'-phosphate from D-erythrose 4-phosphate: step 3/5. Catalyzes the reversible conversion of 3-phosphohydroxypyruvate to phosphoserine and of 3-hydroxy-2-oxo-4-phosphonooxybutanoate to phosphohydroxythreonine. This chain is Phosphoserine aminotransferase, found in Yersinia pestis (strain Pestoides F).